A 167-amino-acid chain; its full sequence is NAD(P)H-quinone oxidoreductase subunit I, chloroplastic (167 aa).

4Fe-4S ferredoxin-type domains follow at residues 55–84 (GRIHFEFDKCIACEVCVRVCPIDLPVVDWK) and 95–124 (LNYSIDFGICIFCGNCVEYCPTNCLSMTEE). 8 residues coordinate [4Fe-4S] cluster: cysteine 64, cysteine 67, cysteine 70, cysteine 74, cysteine 104, cysteine 107, cysteine 110, and cysteine 114.

This sequence belongs to the complex I 23 kDa subunit family. In terms of assembly, NDH is composed of at least 16 different subunits, 5 of which are encoded in the nucleus. Requires [4Fe-4S] cluster as cofactor.

It localises to the plastid. The protein localises to the chloroplast thylakoid membrane. The enzyme catalyses a plastoquinone + NADH + (n+1) H(+)(in) = a plastoquinol + NAD(+) + n H(+)(out). It carries out the reaction a plastoquinone + NADPH + (n+1) H(+)(in) = a plastoquinol + NADP(+) + n H(+)(out). Functionally, NDH shuttles electrons from NAD(P)H:plastoquinone, via FMN and iron-sulfur (Fe-S) centers, to quinones in the photosynthetic chain and possibly in a chloroplast respiratory chain. The immediate electron acceptor for the enzyme in this species is believed to be plastoquinone. Couples the redox reaction to proton translocation, and thus conserves the redox energy in a proton gradient. The sequence is that of NAD(P)H-quinone oxidoreductase subunit I, chloroplastic from Panax ginseng (Korean ginseng).